Reading from the N-terminus, the 449-residue chain is Phosphoglucosamine mutase (449 aa).

Catalysis depends on S104, which acts as the Phosphoserine intermediate. 4 residues coordinate Mg(2+): S104, D243, D245, and D247. Position 104 is a phosphoserine (S104).

The protein belongs to the phosphohexose mutase family. Requires Mg(2+) as cofactor. Activated by phosphorylation.

It carries out the reaction alpha-D-glucosamine 1-phosphate = D-glucosamine 6-phosphate. Functionally, catalyzes the conversion of glucosamine-6-phosphate to glucosamine-1-phosphate. This chain is Phosphoglucosamine mutase, found in Xanthomonas axonopodis pv. citri (strain 306).